The following is a 475-amino-acid chain: MSPQTETKASVGFKAGVKDYKLTYYTPEYETKPTDILAAFRVTPQPGVPPEEAGAAVAAESSTGTWTTVWTDGLTSLDRYKGRCYHIEPVAGEESQFIAYVAYPLDLFEEGSVTNMFTSIVGNVFGFKALRALRLEDLRIPPAYSKTFQGPPHGIQVERDKLNKYGRPLLGCTIKPKLGLSAKNYGRAVYECLRGGLDFTKDDENVNSQPFMRWRDRFLFCAEAIFKSQAETGEIKGHYLNATAGTCEEMIKRAVFARELGVPIVMHDYLTGGFTANTSLAHYCRDNGLLLHIHRAMHAVIDRQKNHGMHFRVLAKALRLSGGDHIHAGTVVGKLEGEREITLGFVDLLRDDFVEKDRSRGIYFTQDWVSLPGVLPVASGGIHVWHMPALTEIFGDDSVLQFGGGTLGHPWGNAPGAVANRVALEACVQARNEGRDLAREGNEIIRAASKWSPELAAACEVWKEIKFEFPAMDTL.

A propeptide spanning residues 1-2 (MS) is cleaved from the precursor. Position 3 is an N-acetylproline (Pro-3). Residue Lys-14 is modified to N6,N6,N6-trimethyllysine. Substrate-binding residues include Asn-123 and Thr-173. Lys-175 (proton acceptor) is an active-site residue. Lys-177 serves as a coordination point for substrate. The Mg(2+) site is built by Lys-201, Asp-203, and Glu-204. An N6-carboxylysine modification is found at Lys-201. His-294 acts as the Proton acceptor in catalysis. Residues Arg-295, His-327, and Ser-379 each contribute to the substrate site.

Belongs to the RuBisCO large chain family. Type I subfamily. As to quaternary structure, heterohexadecamer of 8 large chains and 8 small chains; disulfide-linked. The disulfide link is formed within the large subunit homodimers. It depends on Mg(2+) as a cofactor. The disulfide bond which can form in the large chain dimeric partners within the hexadecamer appears to be associated with oxidative stress and protein turnover.

The protein localises to the plastid. Its subcellular location is the chloroplast. The enzyme catalyses 2 (2R)-3-phosphoglycerate + 2 H(+) = D-ribulose 1,5-bisphosphate + CO2 + H2O. It carries out the reaction D-ribulose 1,5-bisphosphate + O2 = 2-phosphoglycolate + (2R)-3-phosphoglycerate + 2 H(+). Functionally, ruBisCO catalyzes two reactions: the carboxylation of D-ribulose 1,5-bisphosphate, the primary event in carbon dioxide fixation, as well as the oxidative fragmentation of the pentose substrate in the photorespiration process. Both reactions occur simultaneously and in competition at the same active site. This Vitis vinifera (Grape) protein is Ribulose bisphosphate carboxylase large chain.